The sequence spans 720 residues: ATP-dependent DNA helicase Hel308 (720 aa).

ATP is bound by residues Ser-23, Gln-28, and Ile-46–Thr-53. The Helicase ATP-binding domain occupies Lys-33–Asp-197. A DEAH box motif is present at residues Asp-145 to His-148. Positions Leu-229–Ile-422 constitute a Helicase C-terminal domain.

It belongs to the helicase family. Hel308 subfamily. In terms of assembly, monomer. Interacts with PCNA. Requires Mg(2+) as cofactor. Zn(2+) serves as cofactor.

It catalyses the reaction Couples ATP hydrolysis with the unwinding of duplex DNA by translocating in the 3'-5' direction.. The catalysed reaction is ATP + H2O = ADP + phosphate + H(+). DNA-dependent ATPase and 3'-5' DNA helicase that may be involved in repair of stalled replication forks. Unwinds the lagging strand from forked DNA structures in a 3'-5' direction. PCNA, the DNA polymerase sliding clamp subunit, stimulates the helicase activity, and may alter substrate specificity. Unwinds branched DNA (Holliday junctions) in an ATP-dependent fashion; ss- and dsDNA stimulate ATPase to the greatest extent, although it preferentially binds DNA with a single-stranded region. Processes a RecA-mediated recombination intermediate between gapped circular and homologous linear dsDNA. In Pyrococcus furiosus (strain ATCC 43587 / DSM 3638 / JCM 8422 / Vc1), this protein is ATP-dependent DNA helicase Hel308.